The primary structure comprises 194 residues: Granulocyte colony-stimulating factor (194 aa).

A signal peptide spans 1 to 20 (KLMALQLLLWHSALWMVQEA). 2 cysteine pairs are disulfide-bonded: Cys-56/Cys-62 and Cys-84/Cys-94. O-linked (GalNAc...) threonine glycosylation is present at Thr-153.

Belongs to the IL-6 superfamily. In terms of assembly, monomer. Post-translationally, O-glycosylated.

The protein localises to the secreted. Its function is as follows. Granulocyte/macrophage colony-stimulating factors are cytokines that act in hematopoiesis by controlling the production, differentiation, and function of 2 related white cell populations of the blood, the granulocytes and the monocytes-macrophages. This CSF induces granulocytes. This is Granulocyte colony-stimulating factor (CSF3) from Felis catus (Cat).